A 309-amino-acid polypeptide reads, in one-letter code: 1,4-dihydroxy-2-naphthoyl-CoA synthase (309 aa).

Substrate-binding positions include arginine 53, 98–102, tyrosine 110, 152–156, threonine 179, serine 185, tyrosine 282, and lysine 297; these read SGGDQ and WAAGG.

It belongs to the enoyl-CoA hydratase/isomerase family. MenB subfamily.

The enzyme catalyses 2-succinylbenzoyl-CoA + H(+) = 1,4-dihydroxy-2-naphthoyl-CoA + H2O. It participates in quinol/quinone metabolism; 1,4-dihydroxy-2-naphthoate biosynthesis; 1,4-dihydroxy-2-naphthoate from chorismate: step 6/7. Its pathway is quinol/quinone metabolism; menaquinone biosynthesis. Its function is as follows. Converts o-succinylbenzoyl-CoA (OSB-CoA) to 1,4-dihydroxy-2-naphthoyl-CoA (DHNA-CoA). This Mycolicibacterium smegmatis (strain ATCC 700084 / mc(2)155) (Mycobacterium smegmatis) protein is 1,4-dihydroxy-2-naphthoyl-CoA synthase.